Reading from the N-terminus, the 1408-residue chain is ABC multidrug transporter MDR1 (1408 aa).

Positions 1–13 (MSASPSPIGAAAG) are enriched in low complexity. The interval 1–103 (MSASPSPIGA…SISSAVPKSH (103 aa)) is disordered. A compositionally biased stretch (basic and acidic residues) spans 17–38 (LQARRDEEVVDSEKDALAHDSH). Transmembrane regions (helical) follow at residues 147–167 (FAAPLEIVAMVFGLLLAIAAG) and 223–243 (LYLMAIGIGMFLATWLYMFIW). The 308-residue stretch at 157–464 (VFGLLLAIAA…LAPELAAVTK (308 aa)) folds into the ABC transmembrane type-1 1 domain. N-linked (GlcNAc...) asparagine glycosylation is present at asparagine 244. Transmembrane regions (helical) follow at residues 296–316 (KVALVFQYAGTFVCGFVLAFV), 321–341 (LAGALISILPVIMICGGIMMT), 408–428 (IMFFAIYAAYALAFYYGGILV), and 436–456 (GIVINVFMSILIGSFSMAMLA). One can recognise an ABC transporter 1 domain in the interval 499–744 (ISFENVRFHY…ENGPYAQLVN (246 aa)). 534–541 (GASGSGKS) provides a ligand contact to ATP. A run of 2 helical transmembrane segments spans residues 838–858 (IFAFIAAICAGMVYPSLAILF) and 882–902 (LWYFITALAAAIVIFFQSAGF). Positions 838–1125 (IFAFIAAICA…VFTFVPDASK (288 aa)) constitute an ABC transmembrane type-1 2 domain. A glycan (N-linked (GlcNAc...) asparagine) is linked at asparagine 934. 4 consecutive transmembrane segments (helical) span residues 952-972 (GLFGPTLGTVVQSCATLIGGC), 973-993 (IIGLCYGPLLSLIGIACIPIL), 1072-1092 (GLTFCIIALVFYIGALWIIDG), and 1099-1119 (FYTVLNSIVFASIQAGNVFTF). N-linked (GlcNAc...) asparagine glycans are attached at residues asparagine 1127 and asparagine 1182. Positions 1162 to 1402 (VRIEGVHFRY…KGGYYDLVQM (241 aa)) constitute an ABC transporter 2 domain. Position 1197–1204 (1197–1204 (GPSGCGKS)) interacts with ATP. Asparagine 1404 carries an N-linked (GlcNAc...) asparagine glycan.

The protein belongs to the ABC transporter superfamily. ABCB family. Multidrug resistance exporter (TC 3.A.1.201) subfamily.

The protein resides in the cell membrane. It catalyses the reaction itraconazole(in) + ATP + H2O = itraconazole(out) + ADP + phosphate + H(+). The enzyme catalyses voriconazole(in) + ATP + H2O = voriconazole(out) + ADP + phosphate + H(+). The catalysed reaction is fluconazole(in) + ATP + H2O = fluconazole(out) + ADP + phosphate + H(+). Its function is as follows. Pleiotropic ABC efflux transporter that confers resistance to structurally and functionally unrelated compounds including azoles such as fluconazole (FLC), itraconazole (ITC), posaconazole (POS), nocodazole and voriconazole (VRC). In Cryptococcus deuterogattii (strain R265) (Cryptococcus gattii VGII (strain R265)), this protein is ABC multidrug transporter MDR1.